The chain runs to 156 residues: Small ribosomal subunit protein uS7 (156 aa).

The protein belongs to the universal ribosomal protein uS7 family. As to quaternary structure, part of the 30S ribosomal subunit. Contacts proteins S9 and S11.

Functionally, one of the primary rRNA binding proteins, it binds directly to 16S rRNA where it nucleates assembly of the head domain of the 30S subunit. Is located at the subunit interface close to the decoding center, probably blocks exit of the E-site tRNA. The chain is Small ribosomal subunit protein uS7 from Pseudomonas fluorescens (strain SBW25).